A 586-amino-acid chain; its full sequence is Proline--tRNA ligase (586 aa).

This sequence belongs to the class-II aminoacyl-tRNA synthetase family. ProS type 1 subfamily. As to quaternary structure, homodimer.

Its subcellular location is the cytoplasm. The catalysed reaction is tRNA(Pro) + L-proline + ATP = L-prolyl-tRNA(Pro) + AMP + diphosphate. Functionally, catalyzes the attachment of proline to tRNA(Pro) in a two-step reaction: proline is first activated by ATP to form Pro-AMP and then transferred to the acceptor end of tRNA(Pro). As ProRS can inadvertently accommodate and process non-cognate amino acids such as alanine and cysteine, to avoid such errors it has two additional distinct editing activities against alanine. One activity is designated as 'pretransfer' editing and involves the tRNA(Pro)-independent hydrolysis of activated Ala-AMP. The other activity is designated 'posttransfer' editing and involves deacylation of mischarged Ala-tRNA(Pro). The misacylated Cys-tRNA(Pro) is not edited by ProRS. This is Proline--tRNA ligase from Kineococcus radiotolerans (strain ATCC BAA-149 / DSM 14245 / SRS30216).